The primary structure comprises 667 residues: DNA ligase (667 aa).

NAD(+) contacts are provided by residues 34–38, 83–84, and Glu-112; these read DSEYD and SL. Lys-114 (N6-AMP-lysine intermediate) is an active-site residue. Positions 135, 169, 285, and 309 each coordinate NAD(+). Positions 403, 406, 421, and 426 each coordinate Zn(2+). The BRCT domain occupies 589-667; the sequence is ASDSYFAGKT…EARLISELKK (79 aa).

The protein belongs to the NAD-dependent DNA ligase family. LigA subfamily. Mg(2+) serves as cofactor. It depends on Mn(2+) as a cofactor.

The enzyme catalyses NAD(+) + (deoxyribonucleotide)n-3'-hydroxyl + 5'-phospho-(deoxyribonucleotide)m = (deoxyribonucleotide)n+m + AMP + beta-nicotinamide D-nucleotide.. Functionally, DNA ligase that catalyzes the formation of phosphodiester linkages between 5'-phosphoryl and 3'-hydroxyl groups in double-stranded DNA using NAD as a coenzyme and as the energy source for the reaction. It is essential for DNA replication and repair of damaged DNA. The protein is DNA ligase of Bacillus licheniformis (strain ATCC 14580 / DSM 13 / JCM 2505 / CCUG 7422 / NBRC 12200 / NCIMB 9375 / NCTC 10341 / NRRL NRS-1264 / Gibson 46).